Consider the following 137-residue polypeptide: MASQKNSESLVGELVNQINELYLTNPNQVIKLAKKAGVENPTFLVKPPTKPTNELSFAKLNNIAETVEKLEKYGLPSLLRQYFMTVVKNPAVIDNVVETYYKIAKIIPKEVENKEPLVISEKEGFVSKSIPPVIKVS.

This is an uncharacterized protein from Acidianus convivator (ATV).